We begin with the raw amino-acid sequence, 492 residues long: Malonate-semialdehyde dehydrogenase (492 aa).

Residues Phe-156, Lys-180, Glu-183, Lys-184, Ser-233, and Thr-255 each contribute to the NAD(+) site. Residue Cys-288 is the Nucleophile of the active site. Glu-387 lines the NAD(+) pocket.

The protein belongs to the aldehyde dehydrogenase family. IolA subfamily. In terms of assembly, homotetramer.

It catalyses the reaction 3-oxopropanoate + NAD(+) + CoA + H2O = hydrogencarbonate + acetyl-CoA + NADH + H(+). It carries out the reaction 2-methyl-3-oxopropanoate + NAD(+) + CoA + H2O = propanoyl-CoA + hydrogencarbonate + NADH + H(+). It functions in the pathway polyol metabolism; myo-inositol degradation into acetyl-CoA; acetyl-CoA from myo-inositol: step 7/7. In terms of biological role, catalyzes the oxidation of malonate semialdehyde (MSA) and methylmalonate semialdehyde (MMSA) into acetyl-CoA and propanoyl-CoA, respectively. Is involved in a myo-inositol catabolic pathway. Bicarbonate, and not CO2, is the end-product of the enzymatic reaction. The polypeptide is Malonate-semialdehyde dehydrogenase (Lacticaseibacillus casei (Lactobacillus casei)).